The chain runs to 796 residues: Leucine--tRNA ligase (796 aa).

Residues 40-51 (PYPSASGLHVGH) carry the 'HIGH' region motif. A 'KMSKS' region motif is present at residues 569-573 (KMSKS). Lysine 572 serves as a coordination point for ATP.

Belongs to the class-I aminoacyl-tRNA synthetase family.

Its subcellular location is the cytoplasm. The catalysed reaction is tRNA(Leu) + L-leucine + ATP = L-leucyl-tRNA(Leu) + AMP + diphosphate. This is Leucine--tRNA ligase from Bdellovibrio bacteriovorus (strain ATCC 15356 / DSM 50701 / NCIMB 9529 / HD100).